The chain runs to 189 residues: Orotate phosphoribosyltransferase (189 aa).

Residues Arg-99, Lys-100, Lys-103, His-105, and 126 to 134 each bind 5-phospho-alpha-D-ribose 1-diphosphate; that span reads EDVITTGGS. Orotate is bound by residues Thr-130 and Arg-158.

This sequence belongs to the purine/pyrimidine phosphoribosyltransferase family. PyrE subfamily. Homodimer. Mg(2+) is required as a cofactor.

It catalyses the reaction orotidine 5'-phosphate + diphosphate = orotate + 5-phospho-alpha-D-ribose 1-diphosphate. It functions in the pathway pyrimidine metabolism; UMP biosynthesis via de novo pathway; UMP from orotate: step 1/2. In terms of biological role, catalyzes the transfer of a ribosyl phosphate group from 5-phosphoribose 1-diphosphate to orotate, leading to the formation of orotidine monophosphate (OMP). The protein is Orotate phosphoribosyltransferase of Thermosynechococcus vestitus (strain NIES-2133 / IAM M-273 / BP-1).